Consider the following 530-residue polypeptide: MAGGVVVNNGGGKDYPGKLTMFVLFACIVAATGGLIFGYDIGISGGVTSMNPFLIKFFPSVYRKEQAAEKNQSNQYCKFDSPLLTMFTSSLYLAALVASFFASTVTRVAGRKWSMFGGGVTFLVGAALNGAAKNVLMLILGRVLLGVGVGFANQSVPLYLSEMAPARLRGMLNIGFQLMITIGILCANLINYGTAKIKGGWGWRVSLALAAVPAAIIAVGALFLPDTPNSLIDRGHTDAAKRMLRRVRGTDDIEEEYNDLVAASEESKLVAHPWRNILQRRYRPQLTMAIAIPLFQQLTGINVIMFYAPVLFKTLGFADDASLMSAVITGLVNVFATFVSIVTVDRLGRRKLFLQGGTQMLACQIVVGSLIGAKFGFSGVADIPKAYAAFVVLFICAYVAGFAWSWGPLGWLVPSEIFPLEIRSAGQSINVSVNMLFTFIIAQAFLPMLCRFKFILFFFFGAWVVIMTLFVAFFLPETKNVPIEEMVLVWKSHWYWGRFIRDEDVHVGADVEMPAAGNRNGKVDPAKLAN.

The Cytoplasmic portion of the chain corresponds to 1–18 (MAGGVVVNNGGGKDYPGK). Residues 19–39 (LTMFVLFACIVAATGGLIFGY) form a helical membrane-spanning segment. Residues 40–81 (DIGISGGVTSMNPFLIKFFPSVYRKEQAAEKNQSNQYCKFDS) are Extracellular-facing. A helical transmembrane segment spans residues 82 to 102 (PLLTMFTSSLYLAALVASFFA). Residues 103 to 119 (STVTRVAGRKWSMFGGG) are Cytoplasmic-facing. A helical membrane pass occupies residues 120-140 (VTFLVGAALNGAAKNVLMLIL). The Extracellular segment spans residues 141–142 (GR). The helical transmembrane segment at 143 to 163 (VLLGVGVGFANQSVPLYLSEM) threads the bilayer. Topologically, residues 164 to 169 (APARLR) are cytoplasmic. A helical membrane pass occupies residues 170–190 (GMLNIGFQLMITIGILCANLI). Residues 191–204 (NYGTAKIKGGWGWR) lie on the Extracellular side of the membrane. A helical transmembrane segment spans residues 205–225 (VSLALAAVPAAIIAVGALFLP). Over 226–291 (DTPNSLIDRG…YRPQLTMAIA (66 aa)) the chain is Cytoplasmic. Residues 292-312 (IPLFQQLTGINVIMFYAPVLF) traverse the membrane as a helical segment. Residues 313–323 (KTLGFADDASL) lie on the Extracellular side of the membrane. Residues 324–344 (MSAVITGLVNVFATFVSIVTV) traverse the membrane as a helical segment. The Cytoplasmic portion of the chain corresponds to 345–359 (DRLGRRKLFLQGGTQ). Residues 360-380 (MLACQIVVGSLIGAKFGFSGV) traverse the membrane as a helical segment. Over 381-388 (ADIPKAYA) the chain is Extracellular. The helical transmembrane segment at 389-409 (AFVVLFICAYVAGFAWSWGPL) threads the bilayer. At 410–428 (GWLVPSEIFPLEIRSAGQS) the chain is on the cytoplasmic side. A helical membrane pass occupies residues 429–449 (INVSVNMLFTFIIAQAFLPML). The Extracellular portion of the chain corresponds to 450–453 (CRFK). Residues 454-474 (FILFFFFGAWVVIMTLFVAFF) form a helical membrane-spanning segment. The Cytoplasmic segment spans residues 475-530 (LPETKNVPIEEMVLVWKSHWYWGRFIRDEDVHVGADVEMPAAGNRNGKVDPAKLAN).

It belongs to the major facilitator superfamily. Sugar transporter (TC 2.A.1.1) family. Expressed in leaf blades, leaf sheaths, anthers, ovaries and embryos. Expressed at low levels in roots and shoots.

It localises to the cell membrane. Its function is as follows. Mediates active uptake of hexoses by sugar:proton symport. Can transport glucose, fructose, mannose, galactose, xylose and ribose. The sequence is that of Sugar transport protein MST6 from Oryza sativa subsp. japonica (Rice).